The sequence spans 880 residues: Alanine--tRNA ligase (880 aa).

Positions 563, 567, 673, and 677 each coordinate Zn(2+).

The protein belongs to the class-II aminoacyl-tRNA synthetase family. Zn(2+) is required as a cofactor.

Its subcellular location is the cytoplasm. The catalysed reaction is tRNA(Ala) + L-alanine + ATP = L-alanyl-tRNA(Ala) + AMP + diphosphate. Catalyzes the attachment of alanine to tRNA(Ala) in a two-step reaction: alanine is first activated by ATP to form Ala-AMP and then transferred to the acceptor end of tRNA(Ala). Also edits incorrectly charged Ser-tRNA(Ala) and Gly-tRNA(Ala) via its editing domain. The chain is Alanine--tRNA ligase from Caulobacter vibrioides (strain ATCC 19089 / CIP 103742 / CB 15) (Caulobacter crescentus).